Here is a 215-residue protein sequence, read N- to C-terminus: MSASLINRSLTNIRTELDFLKGSNVISNDVYDQINKSLPAKWDPANAPRNASPASLEYVEALYQFDPQQDGDLGLKPGDKVQLLEKLSPEWYKGSCNGRTGIFPANYVKPAFSGSNGPSNLPPPPQYKAQELQQIPTQNSAASSYQQQPFPPPSTNYYQQPQQQPQQAPPPQQQQQQQQHQSSHSHLKSFGSKLGNAAIFGAGASIGSDIVNNIF.

S2 is modified (N-acetylserine). Phosphoserine occurs at positions 52 and 55. The SH3 domain maps to 54–113 (ASLEYVEALYQFDPQQDGDLGLKPGDKVQLLEKLSPEWYKGSCNGRTGIFPANYVKPAFS). A Glycyl lysine isopeptide (Lys-Gly) (interchain with G-Cter in ubiquitin) cross-link involves residue K80. Residues 114–189 (GSNGPSNLPP…HQSSHSHLKS (76 aa)) form a disordered region. Positions 124–127 (PPQY) match the PY motif motif.

Belongs to the LSB1 family. Interacts with LAS17, RSP5 and SUP35. Ubiquitinated by RSP5. Ubiquitination reduces the protein abundance and its prion-inducing ability.

The protein localises to the cytoplasm. The protein resides in the nucleus. It is found in the cytoskeleton. Its subcellular location is the actin patch. Functionally, overproduction promotes the de novo induction of the [PSI+] prion form of SUP35. The prion-inducing effect depends on the association with the actin cytoskeleton. Also implicated in prion maintenance during heat stress. The chain is [PSI+] inducibility protein 3 (PIN3) from Saccharomyces cerevisiae (strain ATCC 204508 / S288c) (Baker's yeast).